The following is a 237-amino-acid chain: DNA repair protein RecO (237 aa).

This sequence belongs to the RecO family.

Its function is as follows. Involved in DNA repair and RecF pathway recombination. This Rickettsia conorii (strain ATCC VR-613 / Malish 7) protein is DNA repair protein RecO.